The primary structure comprises 271 residues: MLDIIELKDNYIKFSISGITPAIANSIRRTLINDIPKLAIENVVFHHGEIRDSEGNVYDSSLPLFDEVVALRLGLIPLKTDLKMNFRDQCSCNGEGCDLCTVKYSINKLGPADVFSSDLIPINNPDLKPVDPMIPIVKLKKGQAMLVTCEAIMGRGKDHAKWQVTSGVSYKYHREFKINKNELENWSFYKDKCPKSVISENENEITFTDDVECRYLQQLFDEKSGVTITEDDTKFIFQFETDGSLTAIETLDYALKRLKERFNNLMESLSE.

This sequence belongs to the archaeal Rpo3/eukaryotic RPB3 RNA polymerase subunit family. As to quaternary structure, part of the RNA polymerase complex.

The protein localises to the cytoplasm. The enzyme catalyses RNA(n) + a ribonucleoside 5'-triphosphate = RNA(n+1) + diphosphate. Functionally, DNA-dependent RNA polymerase (RNAP) catalyzes the transcription of DNA into RNA using the four ribonucleoside triphosphates as substrates. The protein is DNA-directed RNA polymerase subunit Rpo3 of Picrophilus torridus (strain ATCC 700027 / DSM 9790 / JCM 10055 / NBRC 100828 / KAW 2/3).